We begin with the raw amino-acid sequence, 295 residues long: Probable alpha-L-glutamate ligase (295 aa).

The ATP-grasp domain maps to 104–287; sequence HQLLAAQGID…VAAAIVQHLE (184 aa). Residues K141, 178–179, D187, and 211–213 each bind ATP; these read EF and RSN. Residues D248, E260, and N262 each contribute to the Mg(2+) site. Residues D248, E260, and N262 each coordinate Mn(2+).

The protein belongs to the RimK family. Requires Mg(2+) as cofactor. It depends on Mn(2+) as a cofactor.

In Xanthomonas euvesicatoria pv. vesicatoria (strain 85-10) (Xanthomonas campestris pv. vesicatoria), this protein is Probable alpha-L-glutamate ligase.